We begin with the raw amino-acid sequence, 227 residues long: PKHD-type hydroxylase BURPS668_A1690 (227 aa).

In terms of domain architecture, Fe2OG dioxygenase spans 78–178; sequence KVFPPLFNRY…RVASFFWIQS (101 aa). Fe cation contacts are provided by His96, Asp98, and His159. Arg169 is a 2-oxoglutarate binding site.

Fe(2+) is required as a cofactor. L-ascorbate serves as cofactor.

This Burkholderia pseudomallei (strain 668) protein is PKHD-type hydroxylase BURPS668_A1690.